The chain runs to 299 residues: Putative activator of 90 kDa heat shock protein ATPase homolog 2 (299 aa).

It belongs to the AHA1 family.

Functionally, co-chaperone that stimulates HSP90 ATPase activity. The chain is Putative activator of 90 kDa heat shock protein ATPase homolog 2 from Homo sapiens (Human).